The chain runs to 410 residues: Transcription termination factor, mitochondrial (410 aa).

The N-terminal 44 residues, 1–44 (MIRSLLRSFETALKLHAGLNMHPMHCSRRLLFSQYENRASPSRL), are a transit peptide targeting the mitochondrion.

The protein belongs to the mTERF family.

The protein resides in the mitochondrion. Its function is as follows. Transcription termination factor. Binds promoter DNA and regulates mitochondrial replication and transcription. Transcription termination activity may be polarized with highest termination activity occurring when its DNA-binding site is positioned in the reverse orientation with respect to the incoming RNA polymerase. Required for normal topology and maintenance of mitochondrial DNA (mtDNA) levels. Regulates mtDNA replication by promoting replication pausing, possibly by acting as a natural barrier to replication fork progression. Its function in replication pausing prevents unregulated replication that may occur for example by collisions between the machineries of DNA replication and transcription during mtDNA synthesis. This ensures the incorporation of RNA transcripts into replication intermediates at the replication fork and allow for proper fork progression. Shares mtDNA binding sites with the mitochondrial termination factor mTerf5 and thereby may antagonize mTerf5 function during replication to regulate pausing. Likely to function downstream of Dref which activates genes involved in mtDNA replication and maintenance. This Drosophila melanogaster (Fruit fly) protein is Transcription termination factor, mitochondrial.